We begin with the raw amino-acid sequence, 293 residues long: DegV domain-containing protein MG326 homolog (293 aa).

The 287-residue stretch at 3-289 (TAIITDSTAS…IDAFSISLLL (287 aa)) folds into the DegV domain. Hexadecanoate is bound by residues Thr-62 and Ser-94.

Functionally, may bind long-chain fatty acids, such as palmitate, and may play a role in lipid transport or fatty acid metabolism. This chain is DegV domain-containing protein MG326 homolog, found in Mycoplasma pneumoniae (strain ATCC 29342 / M129 / Subtype 1) (Mycoplasmoides pneumoniae).